We begin with the raw amino-acid sequence, 1136 residues long: Receptor-type guanylate cyclase gcy-4 (1136 aa).

An N-terminal signal peptide occupies residues 1 to 21 (MRQLNYYIFISTILTYNLTHG). Topologically, residues 22–485 (QGPRPVIRVG…CPLPIFEQYR (464 aa)) are extracellular. Residues Asn-40, Asn-194, Asn-252, Asn-351, Asn-377, Asn-386, and Asn-438 are each glycosylated (N-linked (GlcNAc...) asparagine). The helical transmembrane segment at 486–506 (ALVIVAIAVTILILLAIIICM) threads the bilayer. The Cytoplasmic segment spans residues 507–1136 (SSKIRNRRVE…LRREMMRVEV (630 aa)). The Protein kinase domain maps to 533–833 (LPMHRRASKS…EDNLMDHVFS (301 aa)). The interval 536 to 565 (HRRASKSSQESETESASETENFTSKSGDTM) is disordered. The Guanylate cyclase domain maps to 891–1021 (TVFFSDLVKF…DTVNTASRME (131 aa)).

It belongs to the adenylyl cyclase class-4/guanylyl cyclase family. Expression is biased toward ASE right (ASER) sensory neuron.

The protein localises to the cell membrane. The enzyme catalyses GTP = 3',5'-cyclic GMP + diphosphate. Its function is as follows. Guanylate cyclase involved in the production of the second messenger cGMP. Regulates chemotaxis responses toward Br(1-) and I(1-) salt ions in ASE right (ASER) sensory neuron. This chain is Receptor-type guanylate cyclase gcy-4, found in Caenorhabditis elegans.